Here is a 406-residue protein sequence, read N- to C-terminus: Tryptophan synthase beta chain (406 aa).

Lys-95 carries the N6-(pyridoxal phosphate)lysine modification.

This sequence belongs to the TrpB family. As to quaternary structure, tetramer of two alpha and two beta chains. It depends on pyridoxal 5'-phosphate as a cofactor.

It catalyses the reaction (1S,2R)-1-C-(indol-3-yl)glycerol 3-phosphate + L-serine = D-glyceraldehyde 3-phosphate + L-tryptophan + H2O. Its pathway is amino-acid biosynthesis; L-tryptophan biosynthesis; L-tryptophan from chorismate: step 5/5. Its function is as follows. The beta subunit is responsible for the synthesis of L-tryptophan from indole and L-serine. The chain is Tryptophan synthase beta chain from Azotobacter vinelandii (strain DJ / ATCC BAA-1303).